The chain runs to 350 residues: TATA box-binding protein-like 2 (350 aa).

Positions 82–150 are disordered; the sequence is ENRDQTVTGN…QPSPETPNSN (69 aa). Residues 94-116 show a composition bias toward basic and acidic residues; the sequence is ASEESCRTRDRQSQLQLPDEHGS. 2 stretches are compositionally biased toward polar residues: residues 118–128 and 139–150; these read LNLNSNSSPDP and SNQPSPETPNSN.

Belongs to the TBP family. Interacts with TAF3. Expressed in myotubes and myofibers (at protein level). Expressed in a wide variety of tissues with highest levels in heart, lung, liver, uterus and placenta and especially the gonads. Expression is higher in the ovary than the testis, and within the ovary expression is localized to the oocytes.

The protein localises to the cytoplasm. Its subcellular location is the nucleus. In terms of biological role, transcription factor required in complex with TAF3 for the differentiation of myoblasts into myocytes. The complex replaces TFIID at specific promoters at an early stage in the differentiation process. The protein is TATA box-binding protein-like 2 of Mus musculus (Mouse).